The following is a 298-amino-acid chain: MKDIISVYDFSKSDFDELFELADKLRNMSTYPKILKEKTVALAFFEPSTRTYLSFNKAAINLGASTIGFSGEEGTSIAKGENLADTIRMLNNYADMIVIRHKFDGAAKFASEISEIPVINAGDGKHEHPTQTVIDFYTIYRNFKNIDGLTFGLMGDLRYARVVNSFLRALTRFKPKKVYLISPPQLSARKEILEELNYPYREVIDYNEVIEEIDVLYVTRIQKERFPDESEYEKVKESYVVDMNLVSKMKKDAIILHALPRVNEISREVDKTPQAKYFEQASYAVPVRMAIFHKIVGE.

Residues Arg-50 and Thr-51 each contribute to the carbamoyl phosphate site. Lys-79 is an L-aspartate binding site. Arg-100, His-128, and Gln-131 together coordinate carbamoyl phosphate. The L-aspartate site is built by Arg-161 and Arg-220. 2 residues coordinate carbamoyl phosphate: Leu-259 and Pro-260.

This sequence belongs to the aspartate/ornithine carbamoyltransferase superfamily. ATCase family. Heterooligomer of catalytic and regulatory chains.

The catalysed reaction is carbamoyl phosphate + L-aspartate = N-carbamoyl-L-aspartate + phosphate + H(+). It functions in the pathway pyrimidine metabolism; UMP biosynthesis via de novo pathway; (S)-dihydroorotate from bicarbonate: step 2/3. Catalyzes the condensation of carbamoyl phosphate and aspartate to form carbamoyl aspartate and inorganic phosphate, the committed step in the de novo pyrimidine nucleotide biosynthesis pathway. The protein is Aspartate carbamoyltransferase catalytic subunit of Sulfurisphaera tokodaii (strain DSM 16993 / JCM 10545 / NBRC 100140 / 7) (Sulfolobus tokodaii).